Reading from the N-terminus, the 678-residue chain is Probable metal-nicotianamine transporter YSL6 (678 aa).

The next 14 membrane-spanning stretches (helical) occupy residues 41 to 61 (VTVR…LITH), 65 to 85 (LTVG…YFLV), 113 to 133 (CVVA…MLAM), 158 to 178 (LGWM…SLVA), 226 to 246 (ISFF…SCGF), 279 to 299 (IVNC…WPYI), 324 to 344 (VFIS…KIIY), 394 to 414 (LAGS…PMIF), 419 to 439 (WYLV…NSYG), 467 to 487 (GGVI…STAA), 512 to 532 (IGTT…WTAF), 561 to 581 (SALP…AILI), 606 to 626 (FYIG…LFVW), and 641 to 661 (IASG…ILSI).

The protein belongs to the YSL (TC 2.A.67.2) family. In terms of tissue distribution, expressed in roots and leaves.

The protein localises to the membrane. May be involved in the transport of nicotianamine-chelated metals. In Oryza sativa subsp. japonica (Rice), this protein is Probable metal-nicotianamine transporter YSL6 (YSL6).